A 583-amino-acid chain; its full sequence is Putative amidase C869.01 (583 aa).

A signal peptide spans 1-19 (MKLQLLFLTLAQLAKHGLA). Catalysis depends on charge relay system residues Lys141 and Ser222. The Acyl-ester intermediate role is filled by Ser246.

It belongs to the amidase family.

It is found in the cytoplasm. The enzyme catalyses a monocarboxylic acid amide + H2O = a monocarboxylate + NH4(+). The chain is Putative amidase C869.01 from Schizosaccharomyces pombe (strain 972 / ATCC 24843) (Fission yeast).